Here is a 375-residue protein sequence, read N- to C-terminus: Lipid-A-disaccharide synthase (375 aa).

Belongs to the LpxB family.

It catalyses the reaction a lipid X + a UDP-2-N,3-O-bis[(3R)-3-hydroxyacyl]-alpha-D-glucosamine = a lipid A disaccharide + UDP + H(+). Its pathway is bacterial outer membrane biogenesis; LPS lipid A biosynthesis. Its function is as follows. Condensation of UDP-2,3-diacylglucosamine and 2,3-diacylglucosamine-1-phosphate to form lipid A disaccharide, a precursor of lipid A, a phosphorylated glycolipid that anchors the lipopolysaccharide to the outer membrane of the cell. The chain is Lipid-A-disaccharide synthase from Pseudomonas putida (strain W619).